We begin with the raw amino-acid sequence, 155 residues long: Endoribonuclease YbeY (155 aa).

Residues H120, H124, and H130 each contribute to the Zn(2+) site.

This sequence belongs to the endoribonuclease YbeY family. Zn(2+) serves as cofactor.

It localises to the cytoplasm. Its function is as follows. Single strand-specific metallo-endoribonuclease involved in late-stage 70S ribosome quality control and in maturation of the 3' terminus of the 16S rRNA. In Staphylococcus aureus (strain MSSA476), this protein is Endoribonuclease YbeY.